Consider the following 110-residue polypeptide: Evasin P1166 (110 aa).

A signal peptide spans 1 to 24 (MEVKIFTLLQIALFIALGIHLVVA). Intrachain disulfides connect C45-C67, C49-C69, and C60-C80. N48 is a glycosylation site (N-linked (GlcNAc...) asparagine). Positions 89 to 110 (SEYPNPKSSEIDAAAPLPRETH) are disordered.

It localises to the secreted. Functionally, salivary chemokine-binding protein which binds to host chemokines CXCL1, CXCL2 and CXCL8. This chain is Evasin P1166, found in Ixodes ricinus (Common tick).